Reading from the N-terminus, the 465-residue chain is Fumarate hydratase class II (465 aa).

Substrate is bound by residues 100 to 102 (SGT), 131 to 134 (HPND), 141 to 143 (SSN), and Thr189. The Proton donor/acceptor role is filled by His190. Residue Ser320 is part of the active site. Residues Ser321 and 326 to 328 (KVN) contribute to the substrate site.

The protein belongs to the class-II fumarase/aspartase family. Fumarase subfamily. In terms of assembly, homotetramer.

The protein localises to the cytoplasm. It carries out the reaction (S)-malate = fumarate + H2O. It participates in carbohydrate metabolism; tricarboxylic acid cycle; (S)-malate from fumarate: step 1/1. Involved in the TCA cycle. Catalyzes the stereospecific interconversion of fumarate to L-malate. This Mesorhizobium japonicum (strain LMG 29417 / CECT 9101 / MAFF 303099) (Mesorhizobium loti (strain MAFF 303099)) protein is Fumarate hydratase class II.